Here is a 350-residue protein sequence, read N- to C-terminus: Histidinol-phosphate aminotransferase (350 aa).

Lysine 209 is modified (N6-(pyridoxal phosphate)lysine).

Belongs to the class-II pyridoxal-phosphate-dependent aminotransferase family. Histidinol-phosphate aminotransferase subfamily. As to quaternary structure, homodimer. The cofactor is pyridoxal 5'-phosphate.

The catalysed reaction is L-histidinol phosphate + 2-oxoglutarate = 3-(imidazol-4-yl)-2-oxopropyl phosphate + L-glutamate. The protein operates within amino-acid biosynthesis; L-histidine biosynthesis; L-histidine from 5-phospho-alpha-D-ribose 1-diphosphate: step 7/9. This is Histidinol-phosphate aminotransferase from Geobacter sp. (strain M21).